The following is a 753-amino-acid chain: Inactive protein-tyrosine phosphatase egg-5 (753 aa).

Disordered regions lie at residues 26 to 46 and 77 to 116; these read TSLQ…STDN and RKKV…YAAP. The span at 35–46 shows a compositional bias: low complexity; sequence NTDDSSADSTDN. Basic and acidic residues predominate over residues 84–94; that stretch reads AQKDRRSKERL. The Tyrosine-protein phosphatase domain maps to 408–661; sequence MERRFEILEN…IFVHRLVAFF (254 aa).

This sequence belongs to the protein-tyrosine phosphatase family. Part of a complex, consisting of pseudophosphatases egg-3, egg-4, egg-5 and kinase mbk-2; this complex is required for the oocyte-to-zygote transition. Interacts (via tyrosine-protein phosphatase domain) with kinase mbk-2 (via 'Tyr-619' and 'Tyr-621'); mbk-2 tyrosine phosphorylation enhances the interaction.

It localises to the cytoplasm. Its subcellular location is the cell cortex. In terms of biological role, inactive phosphatase which acts redundantly with egg-4 in the oocyte-to-zygote transition. Required for polarized cortical actin cytoskeleton rearrangement in the oocyte before and after fertilization. Together with egg-4, required for the cortical localization of kinase mbk-2 in maturing oocyte until the end of meiosis I. Also required for kinase mbk-2, pseudophosphatase egg-3 and chitin synthase chs-1 localization to cytoplasmic foci after fertilization. This chain is Inactive protein-tyrosine phosphatase egg-5, found in Caenorhabditis elegans.